The sequence spans 441 residues: MSETHLSNQKFADFSLNKEIKTALNESGFEFCTPIQALSLPILLQKKDIAGQAQTGTGKTLAFLVATFDHLLSTPVPEGRQLNQPRAMIMAPTRELAIQIAKDATLLAKHTGLKVGIVYGGESYDVQRKVLDKGVDILIGTTGRIIDYVRQGIINLSAIQAVVLDEADRMFDLGFIKDIRFLFRRMPDAKSRLNMLFSATLSMKVQELAYDHMNEPEKVVIAPNEKTSKNIKEEIFYPSMDEKMRLLLSLIEEDWPEKAIVFSNTKHSCENVWSWLEGDGHRVGLLTGDVPQKKRIRILEQFTEGKLDILVATDVAARGLHISDVSHVYNYDLPDDCEDYVHRIGRTGRAGKKGVSVSFACEEYALNLPAIEEYITHSIPVTNYDSEGLLDDIPAPIRVHRKHNNRPQQGRNNSGRPQGRNGNRAGGRNGPRRHDQVRRHS.

Positions Gln9–Ala37 match the Q motif motif. Residues Leu40–Val219 enclose the Helicase ATP-binding domain. Position 53-60 (Ala53–Thr60) interacts with ATP. Positions Asp165 to Asp168 match the DEAD box motif. Residues Lys243–Leu390 enclose the Helicase C-terminal domain. Residues Arg401–Ser441 are disordered.

It belongs to the DEAD box helicase family. RhlB subfamily. Component of the RNA degradosome, which is a multiprotein complex involved in RNA processing and mRNA degradation.

It localises to the cytoplasm. It carries out the reaction ATP + H2O = ADP + phosphate + H(+). Functionally, DEAD-box RNA helicase involved in RNA degradation. Has RNA-dependent ATPase activity and unwinds double-stranded RNA. This Shewanella woodyi (strain ATCC 51908 / MS32) protein is ATP-dependent RNA helicase RhlB.